Reading from the N-terminus, the 252-residue chain is Redox-sensing transcriptional repressor Rex (252 aa).

A DNA-binding region (H-T-H motif) is located at residues 26–65 (LYLRALTALSERSVPTVSSEELAAAAGVNSAKLRKDFSYL). An NAD(+)-binding site is contributed by 100 to 105 (GIGNLG). Residues 222–252 (EAAAEGAIPAAASKESADKGPDGDVPAVMPA) are disordered.

It belongs to the transcriptional regulatory Rex family. In terms of assembly, homodimer.

The protein localises to the cytoplasm. Its function is as follows. Modulates transcription in response to changes in cellular NADH/NAD(+) redox state. This chain is Redox-sensing transcriptional repressor Rex, found in Streptomyces avermitilis (strain ATCC 31267 / DSM 46492 / JCM 5070 / NBRC 14893 / NCIMB 12804 / NRRL 8165 / MA-4680).